The following is a 296-amino-acid chain: ATP phosphoribosyltransferase (296 aa).

Belongs to the ATP phosphoribosyltransferase family. Long subfamily. Requires Mg(2+) as cofactor.

It localises to the cytoplasm. It carries out the reaction 1-(5-phospho-beta-D-ribosyl)-ATP + diphosphate = 5-phospho-alpha-D-ribose 1-diphosphate + ATP. Its pathway is amino-acid biosynthesis; L-histidine biosynthesis; L-histidine from 5-phospho-alpha-D-ribose 1-diphosphate: step 1/9. With respect to regulation, feedback inhibited by histidine. Catalyzes the condensation of ATP and 5-phosphoribose 1-diphosphate to form N'-(5'-phosphoribosyl)-ATP (PR-ATP). Has a crucial role in the pathway because the rate of histidine biosynthesis seems to be controlled primarily by regulation of HisG enzymatic activity. This Halorubrum lacusprofundi (strain ATCC 49239 / DSM 5036 / JCM 8891 / ACAM 34) protein is ATP phosphoribosyltransferase.